Consider the following 368-residue polypeptide: Protein PXR1 (368 aa).

The tract at residues 1-24 is disordered; it reads MGLAGAKNKRKLGNDPNNTKWSRN. A compositionally biased stretch (polar residues) spans 15–24; the sequence is DPNNTKWSRN. The G-patch domain occupies 25 to 79; the sequence is TDTFGQKILRAQGWQPGEYLGAKDAAHAEWHTEANTTHIRVTLKDDTLGLGAKRN. Residues 144-337 are disordered; the sequence is TPDEEAEEIP…GYSTPIPTGS (194 aa). Residues 176–186 show a composition bias toward basic and acidic residues; that stretch reads RRSDKEDDKLG. Basic residues-rich tracts occupy residues 187-196 and 257-277; these read KKEKKSKKRK and DKKR…KKEK. The span at 310 to 337 shows a compositional bias: low complexity; sequence PSSAPTPTDSNSSTPTGSGYSTPIPTGS.

This sequence belongs to the PINX1 family.

The protein localises to the nucleus. It localises to the nucleolus. Its function is as follows. Involved in rRNA-processing at A0, A1 and A2 sites and negatively regulates telomerase. The chain is Protein PXR1 (PXR1) from Chaetomium globosum (strain ATCC 6205 / CBS 148.51 / DSM 1962 / NBRC 6347 / NRRL 1970) (Soil fungus).